Reading from the N-terminus, the 1721-residue chain is Intersectin-1 (1721 aa).

The region spanning 21–109 (ERAKHDQQFH…PVMKQQPVAI (89 aa)) is the EH 1 domain. Residues 53 to 88 (LPQPVLAQIWALADMNNDGRMDQVEFSIAMKLIKLK) enclose the EF-hand 1 domain. Positions 66, 68, 70, 72, and 77 each coordinate Ca(2+). Ser203 is subject to Phosphoserine. Residues 221–310 (SRLKYRQLFN…PEYIPPSFRR (90 aa)) form the EH 2 domain. The region spanning 254–289 (LPQAQLASIWNLSDIDQDGKLTAEEFILAMHLIDVA) is the EF-hand 2 domain. The Ca(2+) site is built by Asp267, Asp269, Asp271, Lys273, and Glu278. Ser318 is modified (phosphoserine). 2 disordered regions span residues 322–348 (STSV…KLPV) and 650–701 (QRRA…KQEA). The tract at residues 326-702 (DQRLPEEPVL…GEEKGKQEAQ (377 aa)) is KLERQ. Residues 355–659 (RENFERGNLE…QRRAQERDKQ (305 aa)) are a coiled coil. Residue Ser687 is modified to Phosphoserine. Positions 740-806 (VKVVYYRALY…PANYAEKIPE (67 aa)) constitute an SH3 1 domain. Positions 836–868 (LAVTSSEPSTTPNNWADFSSTWPTSTNEKPETD) are disordered. Positions 838–862 (VTSSEPSTTPNNWADFSSTWPTSTN) are enriched in polar residues. At Thr897 the chain carries Phosphothreonine. Ser901, Ser902, and Ser904 each carry phosphoserine. Positions 913-971 (VEGLQAQALYPWRAKKDNHLNFNKNDVITVLEQQDMWWFGEVQGQKGWFPKSYVKLISG) constitute an SH3 2 domain. Phosphoserine occurs at positions 978, 986, and 995. SH3 domains follow at residues 1002–1060 (VSGE…LKDS) and 1074–1138 (KKPE…LLSP). Positions 1074–1138 (KKPEIAQVIA…PANYVKLLSP (65 aa)) are required for interaction with FCHSD2. The short motif at 1104–1127 (RKKNPGGWWEGELQARGKKRQIGW) is the Bipartite nuclear localization signal; in isoform 2 element. Residue Ser1137 is modified to Phosphoserine. At Thr1144 the chain carries Phosphothreonine. Residues 1155-1214 (AAVCQVIGMYDYTAQNDDELAFNKGQIINVLNKEDPDWWKGEVNGQVGLFPSNYVKLTTD) form the SH3 5 domain. Residues 1237-1423 (KRQGYIHELI…EELCSQVNEG (187 aa)) enclose the DH domain. One can recognise a PH domain in the interval 1462–1571 (KFLHSGKLYK…WVQKIKAASE (110 aa)). A C2 domain is found at 1579 to 1695 (KKREKAYLVR…KKDQGSKGPV (117 aa)). Ser1645 carries the phosphoserine modification. Residues Asp1667, Ser1670, and Asp1673 each contribute to the Ca(2+) site.

Interacts (via DH domain) with CDC42. Interacts (via SH3 domain 1) with WASL. Interacts with dynamin, SNAP25 and SNAP23. Interacts with clathrin-associated proteins and other components of the endocytic machinery, such as SPIN90, EPS15, EPN1, EPN2, STON2, FCHO1, FCHO2 and DAB2. Interacts (via SH3 domains) with REPS1 and SGIP1. Interacts with ARHGAP31. Interacts with ADAM15. Interacts with PRRT2. Interacts (via SH3 domain 4) with FCHSD2 (via SH3 domain 2). Interacts (via SH3 domain 1) with DENND2B. Interacts (via SH3 domains) with CBL. Isoform 2: Interacts with CBL and DNM1. Isoform 2: Interacts with LMNA. Isoform 2: Interacts with importin subunit KPNA1; this is likely to mediate its import into the nucleus. Interacts with DNM2. As to quaternary structure, (Microbial infection) Interacts with vaccinia virus protein A36. Ca(2+) serves as cofactor. Isoform 1 is expressed almost exclusively in the brain. Isoform 2 is detected in brain, spleen, lung, liver, heart, skeletal muscle and kidney. Isoform 5 is primarily expressed in brain, spleen, lung and kidney (at protein level). Isoform 1 and isoform 2 are detected in brain. Isoform 2 is ubiquitous in adult and fetal tissues with high expression in skeletal muscle, heart, spleen, ovary, testis and all fetal tissues tested and low expression in thymus, blood, lung, liver and pancreas. Isoform 1 is expressed almost exclusively in the brain, in all brain regions. Not expressed in the spinal cord.

It is found in the endomembrane system. The protein localises to the synapse. It localises to the synaptosome. The protein resides in the cell projection. Its subcellular location is the lamellipodium. It is found in the cell membrane. The protein localises to the membrane. It localises to the clathrin-coated pit. The protein resides in the recycling endosome. Its subcellular location is the endosome. It is found in the cytoplasmic vesicle. The protein localises to the cytoplasm. It localises to the nucleus envelope. Its function is as follows. Adapter protein that provides a link between the endocytic membrane traffic and the actin assembly machinery. Acts as a guanine nucleotide exchange factor (GEF) for CDC42, and thereby stimulates actin nucleation mediated by WASL and the ARP2/3 complex. Plays a role in the assembly and maturation of clathrin-coated vesicles. Recruits FCHSD2 to clathrin-coated pits. Involved in endocytosis of activated EGFR, and probably also other growth factor receptors. Involved in endocytosis of integrin beta-1 (ITGB1) and transferrin receptor (TFR); internalization of ITGB1 as DAB2-dependent cargo but not TFR may involve association with DAB2. Promotes ubiquitination and subsequent degradation of EGFR, and thereby contributes to the down-regulation of EGFR-dependent signaling pathways. In chromaffin cells, required for normal exocytosis of catecholamines. Required for rapid replenishment of release-ready synaptic vesicles at presynaptic active zones. Inhibits ARHGAP31 activity toward RAC1. Plays a role in synaptic vesicle endocytosis in brain neurons. The protein is Intersectin-1 of Homo sapiens (Human).